The chain runs to 346 residues: Holliday junction branch migration complex subunit RuvB (346 aa).

Residues 1-16 (MSDADRLITPEKRGED) show a composition bias toward basic and acidic residues. The disordered stretch occupies residues 1 to 23 (MSDADRLITPEKRGEDIDTTLRP). Residues 1–182 (MSDADRLITP…FGIPVRLAFY (182 aa)) form a large ATPase domain (RuvB-L) region. Residues Leu-21, Arg-22, Gly-63, Lys-66, Thr-67, Thr-68, 129–131 (EDF), Arg-172, Tyr-182, and Arg-219 each bind ATP. Thr-67 contacts Mg(2+). Positions 183–253 (TVDELELIVR…IADEALTRLL (71 aa)) are small ATPAse domain (RuvB-S). Positions 256–346 (NMGLDQLDMR…AQFRLTLEDD (91 aa)) are head domain (RuvB-H). Residues Arg-292, Arg-311, and Arg-316 each coordinate DNA.

The protein belongs to the RuvB family. As to quaternary structure, homohexamer. Forms an RuvA(8)-RuvB(12)-Holliday junction (HJ) complex. HJ DNA is sandwiched between 2 RuvA tetramers; dsDNA enters through RuvA and exits via RuvB. An RuvB hexamer assembles on each DNA strand where it exits the tetramer. Each RuvB hexamer is contacted by two RuvA subunits (via domain III) on 2 adjacent RuvB subunits; this complex drives branch migration. In the full resolvosome a probable DNA-RuvA(4)-RuvB(12)-RuvC(2) complex forms which resolves the HJ.

It is found in the cytoplasm. The enzyme catalyses ATP + H2O = ADP + phosphate + H(+). In terms of biological role, the RuvA-RuvB-RuvC complex processes Holliday junction (HJ) DNA during genetic recombination and DNA repair, while the RuvA-RuvB complex plays an important role in the rescue of blocked DNA replication forks via replication fork reversal (RFR). RuvA specifically binds to HJ cruciform DNA, conferring on it an open structure. The RuvB hexamer acts as an ATP-dependent pump, pulling dsDNA into and through the RuvAB complex. RuvB forms 2 homohexamers on either side of HJ DNA bound by 1 or 2 RuvA tetramers; 4 subunits per hexamer contact DNA at a time. Coordinated motions by a converter formed by DNA-disengaged RuvB subunits stimulates ATP hydrolysis and nucleotide exchange. Immobilization of the converter enables RuvB to convert the ATP-contained energy into a lever motion, pulling 2 nucleotides of DNA out of the RuvA tetramer per ATP hydrolyzed, thus driving DNA branch migration. The RuvB motors rotate together with the DNA substrate, which together with the progressing nucleotide cycle form the mechanistic basis for DNA recombination by continuous HJ branch migration. Branch migration allows RuvC to scan DNA until it finds its consensus sequence, where it cleaves and resolves cruciform DNA. This is Holliday junction branch migration complex subunit RuvB from Agrobacterium fabrum (strain C58 / ATCC 33970) (Agrobacterium tumefaciens (strain C58)).